Consider the following 206-residue polypeptide: MTHSTGTLYIISAPSGAGKSSLVKALTDTNPDIRVSISHTTRAMRPGEVDGVNYHFVTREEFVKMGEHGDFLERAEVFGNFYGTSQSRLQQTLDEGHDLILEIDWQGAEQVRKLMPQARSIFILPPSLQALHQRLTNRGQDSDEIIDGRMREAVSEMSHYVEYDYLIINDDFAHALDDLKAIFRANQLQQKRQQVRFGKLLAELLG.

Residues 6 to 184 form the Guanylate kinase-like domain; it reads GTLYIISAPS…ALDDLKAIFR (179 aa). 13-20 provides a ligand contact to ATP; sequence APSGAGKS.

The protein belongs to the guanylate kinase family.

It localises to the cytoplasm. It carries out the reaction GMP + ATP = GDP + ADP. In terms of biological role, essential for recycling GMP and indirectly, cGMP. The protein is Guanylate kinase of Pseudomonas fluorescens (strain Pf0-1).